The following is a 91-amino-acid chain: Small integral membrane protein 13 (91 aa).

A helical transmembrane segment spans residues 10–30; it reads LVFVATLLIVLLLMVCGWYFV. The tract at residues 47 to 91 is disordered; sequence DTGSQEGDHEPSGSETEEDTSSSPHRIRSARQRRAPADEGHRPLT. Ser58 and Ser60 each carry phosphoserine. Thr62 carries the phosphothreonine modification. Residue Ser69 is modified to Phosphoserine. A compositionally biased stretch (basic residues) spans 71–80; that stretch reads HRIRSARQRR. A compositionally biased stretch (basic and acidic residues) spans 81–91; the sequence is APADEGHRPLT.

It belongs to the SMIM13 family.

The protein resides in the membrane. This is Small integral membrane protein 13 (SMIM13) from Homo sapiens (Human).